A 381-amino-acid chain; its full sequence is MGRGFLRGVLTLLPLRSVLQVQHCMLVSEPDLPPKRPRNNLMAPPRIGTHNGTFHCDEALACALLRLLPEYRNAEIVRTRDPEKLALCDIVVDVGGEYNPQRHRYDHHQRTFTETMSSLCPGKPWQTKLSSAGLVYLHFGHKLLAQLLGTSEEDSVVDTIYDKMYENFVEEVDAVDNGISQWAEGEPRYALTTTLSARVSRLNPTWNQPDQDTEAGFRRAMDLVQEEFLQRLNFYQHSWLPARALVEEALAQRFKVDSSGEIVELAKGGCPWKEHLYHLESELSPTVAITFVIYTDQAGQWRVQCVPKEPHSFQSRLPLPEPWRGLRDEALDQVSGIPGCIFVHASGFIGGHHTREGALNMARATLAQRTAPVPLANAVVQ.

The transit peptide at M1–I47 directs the protein to the mitochondrion. 2 positions are modified to N6-acetyllysine: K267 and K273.

This sequence belongs to the MYG1 family.

The protein localises to the nucleus. The protein resides in the nucleoplasm. It localises to the mitochondrion matrix. Its subcellular location is the nucleolus. 3'-5' RNA exonuclease which cleaves in situ on specific transcripts in both nucleus and mitochondrion. Involved in regulating spatially segregated organellar RNA processing, acts as a coordinator of nucleo-mitochondrial crosstalk. In nucleolus, processes pre-ribosomal RNA involved in ribosome assembly and alters cytoplasmic translation. In mitochondrial matrix, processes 3'-termini of the mito-ribosomal and messenger RNAs and controls translation of mitochondrial proteins. The sequence is that of MYG1 exonuclease from Rattus norvegicus (Rat).